The primary structure comprises 555 residues: MDNEKGTSSSDLTTRQRKPLGWKAMPYIIGNETLERLATFGLMANFMVYMVREYHMDQVQAVTLINTWSALTNFAPIIGAFISDSYTGKFNTIVFGSIAELLGMLVLTFTSLVPNLRPPPCTADQITGQCIPYSYSQLYVLLSGLFLLSVGTGGIRSCSVPFSLDQFDDSTEEGREGSRSFFSWYYTTHTIVQLVSMTLVLYVQNNISWGIGFAIPTVLNFFALLLLFVGTRYYVFVKPEGSVFSGVFKVLVAAYKKRKARFTSGIDYHQPLLETDLQSNKLVLTDQFRFLNKAVIVMNNDEAGNEEWRTCTVRQIEDIKSIISIIPIFASSIIGFLAMNQQQTFTVSQALKMDLQFPGTSYLIPPASITVISLLNIGIWLPFYETVLVRHIENITKQNGGISLLQKVGIGNIFSISTMLISGIVERKRRDLSLNGVKMSVFWLTPQQVLMGFYQVFTIVGLTEFFNKQVPINMRSIGNSLLYLGLSLASYLSSAMVSIVHSVTARGGQSWLTDDIDKSKLDCFYYFIAALSTLNFIFFFWCARRYRYRNYSNEQ.

The next 12 membrane-spanning stretches (helical) occupy residues 62 to 82 (VTLI…GAFI), 93 to 113 (IVFG…TSLV), 135 to 155 (YSQL…TGGI), 181 to 201 (FFSW…TLVL), 209 to 229 (WGIG…LLFV), 234 to 254 (YVFV…LVAA), 319 to 339 (IKSI…FLAM), 363 to 383 (LIPP…WLPF), 405 to 425 (LQKV…SGIV), 441 to 461 (VFWL…TIVG), 480 to 500 (SLLY…VSIV), and 523 to 543 (CFYY…FWCA).

It belongs to the major facilitator superfamily. Proton-dependent oligopeptide transporter (POT/PTR) (TC 2.A.17) family. Not detected.

It is found in the membrane. The sequence is that of Putative protein NRT1/ PTR FAMILY 2.14 (NPF2.14) from Arabidopsis thaliana (Mouse-ear cress).